The following is a 411-amino-acid chain: C6 finger domain transcription factor hasA (411 aa).

Residues 1-17 show a composition bias toward polar residues; it reads MTSTLPYLTSPPATHPS. The interval 1 to 21 is disordered; it reads MTSTLPYLTSPPATHPSNSDH. A DNA-binding region (zn(2)-C6 fungal-type) is located at residues 28 to 54; sequence CDSCHQCKVKCSGGSPCFRCTSKGLNC.

The protein resides in the nucleus. Transcription factor; part of the gene cluster that mediates the biosynthesis of hexadehydro-astechrome (HAS), a tryptophan-derived iron(III)-complex that acts as a virulence factor in infected mice. Positively regulates the expression of the HAS biosynthetic genes. The chain is C6 finger domain transcription factor hasA from Aspergillus fumigatus (strain CBS 144.89 / FGSC A1163 / CEA10) (Neosartorya fumigata).